The sequence spans 417 residues: Probable histone-binding protein lin-53 (417 aa).

WD repeat units lie at residues 118-158, 170-210, 220-260, 263-303, 307-347, and 364-404; these read NHEG…AVPR, GHTK…NVAG, GHES…PGHC, AHSA…MKLH, SHRD…EDQS, and GHTA…YNEV.

The protein belongs to the WD repeat RBAP46/RBAP48/MSI1 family. Binds directly to helix 1 of the histone fold of histone H4, a region that is not accessible when H4 is in chromatin. Probable component of a NuRD-like complex, composed of at least lin-53 and hda-1. Interacts with lin-35. Interacts with hda-1; the interaction is direct. Component of the DRM complex, at least composed of lin-9, lin-35, lin-37, lin-52, lin-53, lin-54- dpl-1 and efl-1. Interacts with hcp-3.

It is found in the nucleus. Its subcellular location is the chromosome. The protein localises to the centromere. Its function is as follows. Core histone-binding subunit that may target chromatin assembly factors, chromatin remodeling factors and histone deacetylases to their histone substrates in a manner that is regulated by nucleosomal DNA. Required for hcp-3 and his-1 stabilization, localization of hcp-3 to centromeres and for proper chromosome segregation. Synthetic multivulva class B (synMuvB) protein. SynMuvB proteins are required to repress the induction of vulval development by Ras signaling and probably act by forming the multiprotein DRM complex that represses transcription. This chain is Probable histone-binding protein lin-53, found in Caenorhabditis elegans.